The primary structure comprises 102 residues: UV-induced protein uvi31 (102 aa).

Belongs to the BolA/IbaG family.

It is found in the mitochondrion matrix. The protein localises to the cytoplasm. It localises to the nucleus. In terms of biological role, acts as a mitochondrial iron-sulfur (Fe-S) cluster assembly factor that facilitates [4Fe-4S] cluster insertion into a subset of mitochondrial proteins such as lipoyl synthase (LS) and succinate dehydrogenase (SDH). Required during the last step of iron-sulfur protein assembly when the iron-sulfur cluster is inserted into the target protein. Probably acts together with the monothiol glutaredoxin grx5. Not required for [2Fe-2S] cluster insertion into mitochondrial proteins. May be involved in control of cell division, especially during the resumption from cell cycle arrest. This Schizosaccharomyces pombe (strain 972 / ATCC 24843) (Fission yeast) protein is UV-induced protein uvi31.